A 248-amino-acid polypeptide reads, in one-letter code: 2,3-bisphosphoglycerate-dependent phosphoglycerate mutase (248 aa).

Substrate is bound by residues 8 to 15, 21 to 22, Arg60, 87 to 90, Lys98, 114 to 115, and 183 to 184; these read RHGESTWN, TG, ERHY, RR, and GN. His9 serves as the catalytic Tele-phosphohistidine intermediate. The Proton donor/acceptor role is filled by Glu87.

The protein belongs to the phosphoglycerate mutase family. BPG-dependent PGAM subfamily. Homodimer.

The enzyme catalyses (2R)-2-phosphoglycerate = (2R)-3-phosphoglycerate. The protein operates within carbohydrate degradation; glycolysis; pyruvate from D-glyceraldehyde 3-phosphate: step 3/5. Functionally, catalyzes the interconversion of 2-phosphoglycerate and 3-phosphoglycerate. The protein is 2,3-bisphosphoglycerate-dependent phosphoglycerate mutase of Burkholderia orbicola (strain MC0-3).